The sequence spans 277 residues: MSNKIAILLLAVVVAVVACAQAQPSRRHHLVHPLLPRFLPRLHRDSNGHRVVGGFQIDVSDAPYQVSLQYFNSHRCGGSVLDNKWVLTAAHCTQGLDPSSLAVRLGSSEHATGGTLVGVLRTVEHPQYDGNTIDYDFSLMELETELTFSDAVQPVELPEHEEPVEPGTMATVSGWGNTQSAVESSDFLRAANVPTVSHEDCSDAYMWFGEITDRMLCAGYQQGGKDACQGDSGGPLVADGKLVGVVSWGYGCAQPGYPGVYGRVASVRDWVRENSGV.

The N-terminal stretch at 1-19 is a signal peptide; that stretch reads MSNKIAILLLAVVVAVVAC. Positions 20-50 are cleaved as a propeptide — activation peptide; the sequence is AQAQPSRRHHLVHPLLPRFLPRLHRDSNGHR. The Peptidase S1 domain occupies 51–276; the sequence is VVGGFQIDVS…VRDWVRENSG (226 aa). Cysteines 76 and 92 form a disulfide. Active-site charge relay system residues include His-91 and Asp-136. 2 cysteine pairs are disulfide-bonded: Cys-201–Cys-217 and Cys-228–Cys-252. The active-site Charge relay system is the Ser-232.

The protein belongs to the peptidase S1 family. Midgut.

The protein resides in the secreted. It carries out the reaction Preferential cleavage: Arg-|-Xaa, Lys-|-Xaa.. In terms of biological role, major function may be to aid in digestion of the blood meal. The chain is Trypsin-2 (TRYP2) from Anopheles gambiae (African malaria mosquito).